The chain runs to 322 residues: Ferric-anguibactin-binding protein FatB (322 aa).

The signal sequence occupies residues 1-22; that stretch reads MFKSTLNIAVAIVCSSLVTLTG. C23 carries the N-palmitoyl cysteine lipid modification. C23 carries S-diacylglycerol cysteine lipidation. Residues 57–322 form the Fe/B12 periplasmic-binding domain; sequence RVAALDMNEV…IDDIIKGYQS (266 aa).

This sequence belongs to the bacterial solute-binding protein 8 family. As to quaternary structure, part of an iron transport system composed of the outer membrane receptor FatA, the periplasmic binding protein FatB and the inner membrane proteins FatC and FatD.

The protein resides in the cell inner membrane. Its function is as follows. Involved in the uptake of iron in complex with the siderophore anguibactin. Binds ferric-anguibactin in the periplasm and mediates its transport into the cytoplasm. This chain is Ferric-anguibactin-binding protein FatB, found in Vibrio anguillarum (strain ATCC 68554 / 775) (Listonella anguillarum).